The sequence spans 323 residues: MSASSGEKSQGRRFAEQQMHKHGWTEGKGLGRRENGISEAIKVKVKCDHAGVGHNSAEQFTFHWWDHVFNKTASSISVEADQDGVKVNRTKDDDAPVTNKKPRKALSNRNMLYGRFVKSATLLPGGEQAVKEPSSSESSDSSGDEDEKLDLSSATKMTDEDLRKVCGGRTAHKGARHGLTMSAKLSRLEEQEREFLAKYGNKQQKDKVKAVTPEITEDLLGKNRQQNDSGECPETNNSHKKKKKKRERVDSEREEEEEEESQENRHEEEQVPLSEEEIKSSKKKKSKKKHREQSASPQEEQVTESTDFCIKPKKKKKKKNKSE.

Disordered stretches follow at residues 1 to 32, 84 to 110, 124 to 185, and 197 to 323; these read MSAS…GLGR, GVKV…SNRN, PGGE…SAKL, and AKYG…NKSE. 2 stretches are compositionally biased toward basic and acidic residues: residues 9–32 and 84–94; these read SQGR…GLGR and GVKVNRTKDDD. In terms of domain architecture, G-patch spans 11-57; the sequence is GRRFAEQQMHKHGWTEGKGLGRRENGISEAIKVKVKCDHAGVGHNSA. Positions 131 to 141 are enriched in low complexity; the sequence is KEPSSSESSDS. Residues 252–261 show a composition bias toward acidic residues; sequence EREEEEEEES. Over residues 281 to 291 the composition is skewed to basic residues; that stretch reads SKKKKSKKKHR. Positions 294 to 306 are enriched in polar residues; that stretch reads SASPQEEQVTEST. Basic residues predominate over residues 311–323; that stretch reads KPKKKKKKKNKSE.

This Xenopus tropicalis (Western clawed frog) protein is G patch domain-containing protein 4 (gpatch4).